Consider the following 381-residue polypeptide: Dual-specificity RNA methyltransferase RlmN (381 aa).

Glu-95 serves as the catalytic Proton acceptor. The region spanning 101–347 is the Radical SAM core domain; sequence EDDRGTLCVS…TTVRKTRGDD (247 aa). Cysteines 108 and 352 form a disulfide. [4Fe-4S] cluster-binding residues include Cys-115, Cys-119, and Cys-122. S-adenosyl-L-methionine is bound by residues 178–179, Ser-210, 232–234, and Asn-309; these read GE and SLH. Cys-352 acts as the S-methylcysteine intermediate in catalysis.

This sequence belongs to the radical SAM superfamily. RlmN family. The cofactor is [4Fe-4S] cluster.

It is found in the cytoplasm. It carries out the reaction adenosine(2503) in 23S rRNA + 2 reduced [2Fe-2S]-[ferredoxin] + 2 S-adenosyl-L-methionine = 2-methyladenosine(2503) in 23S rRNA + 5'-deoxyadenosine + L-methionine + 2 oxidized [2Fe-2S]-[ferredoxin] + S-adenosyl-L-homocysteine. It catalyses the reaction adenosine(37) in tRNA + 2 reduced [2Fe-2S]-[ferredoxin] + 2 S-adenosyl-L-methionine = 2-methyladenosine(37) in tRNA + 5'-deoxyadenosine + L-methionine + 2 oxidized [2Fe-2S]-[ferredoxin] + S-adenosyl-L-homocysteine. Its function is as follows. Specifically methylates position 2 of adenine 2503 in 23S rRNA and position 2 of adenine 37 in tRNAs. m2A2503 modification seems to play a crucial role in the proofreading step occurring at the peptidyl transferase center and thus would serve to optimize ribosomal fidelity. The sequence is that of Dual-specificity RNA methyltransferase RlmN from Bordetella petrii (strain ATCC BAA-461 / DSM 12804 / CCUG 43448).